Here is a 153-residue protein sequence, read N- to C-terminus: 3-dehydroquinate dehydratase (153 aa).

Tyr26 functions as the Proton acceptor in the catalytic mechanism. 3 residues coordinate substrate: Asn77, His83, and Asp90. His103 acts as the Proton donor in catalysis. Substrate is bound by residues 104–105 and Arg114; that span reads LS.

The protein belongs to the type-II 3-dehydroquinase family. In terms of assembly, homododecamer.

It catalyses the reaction 3-dehydroquinate = 3-dehydroshikimate + H2O. It functions in the pathway metabolic intermediate biosynthesis; chorismate biosynthesis; chorismate from D-erythrose 4-phosphate and phosphoenolpyruvate: step 3/7. Functionally, catalyzes a trans-dehydration via an enolate intermediate. The protein is 3-dehydroquinate dehydratase of Colwellia psychrerythraea (strain 34H / ATCC BAA-681) (Vibrio psychroerythus).